The primary structure comprises 556 residues: Solute carrier family 22 member 1 (556 aa).

Over 1–21 (MPTVDDVLEQVGEFGWFQKQA) the chain is Cytoplasmic. A helical membrane pass occupies residues 22–42 (FLLLCLISASLAPIYVGIVFL). The Extracellular segment spans residues 43 to 150 (GFTPGHYCQN…LVCGDAWKVD (108 aa)). An N-linked (GlcNAc...) asparagine glycan is attached at N71. A helical transmembrane segment spans residues 151 to 171 (LFQSCVNLGFFLGSLVVGYIA). Residues 172-177 (DRFGRK) lie on the Cytoplasmic side of the membrane. The helical transmembrane segment at 178-198 (LCLLVTTLVTSVSGVLTAVAP) threads the bilayer. Residues 199-211 (DYTSMLLFRLLQG) lie on the Extracellular side of the membrane. The chain crosses the membrane as a helical span at residues 212–231 (MVSKGSWVSGYTLITEFVGS). Topologically, residues 232–238 (GYRRTTA) are cytoplasmic. Residues 239-259 (ILYQMAFTVGLVGLAGVAYAI) form a helical membrane-spanning segment. The Extracellular segment spans residues 260–263 (PDWR). The chain crosses the membrane as a helical span at residues 264 to 284 (WLQLAVSLPTFLFLLYYWFVP). Residues 284–288 (PESPR) carry the Proline-rich sequence motif. At 285-348 (ESPRWLLSQK…FRTPNLRKHT (64 aa)) the chain is on the cytoplasmic side. Position 334 is a phosphoserine (S334). The chain crosses the membrane as a helical span at residues 349–369 (VILMYLWFSCAVLYQGLIMHV). The Extracellular portion of the chain corresponds to 370–377 (GATGANLY). Residues 378 to 398 (LDFFYSSLVEFPAAFIILVTI) traverse the membrane as a helical segment. At 399 to 403 (DRIGR) the chain is on the cytoplasmic side. The helical transmembrane segment at 404–424 (IYPIAASNLVTGAACLLMIFI) threads the bilayer. The Extracellular portion of the chain corresponds to 425-429 (PHELH). Residues 430–452 (WLNVTLACLGRMGATIVLQMVCL) form a helical membrane-spanning segment. The Cytoplasmic segment spans residues 453–465 (VNAELYPTFIRNL). The helical transmembrane segment at 466–486 (GMMVCSALCDLGGIFTPFMVF) threads the bilayer. The Extracellular segment spans residues 487–493 (RLMEVWQ). The chain crosses the membrane as a helical span at residues 494–514 (ALPLILFGVLGLTAGAMTLLL). The Cytoplasmic segment spans residues 515–556 (PETKGVALPETIEEAENLGRRKSKAKENTIYLQVQTGKSSST). T543 is modified (phosphothreonine).

It belongs to the major facilitator (TC 2.A.1) superfamily. Organic cation transporter (TC 2.A.1.19) family. In terms of processing, phosphorylated. In terms of tissue distribution, expressed in kidney cortex in S1, S2 segments of renal proximal tubules as well as in kidney medulla. Expressed throughout the liver lobuli, in hepatocytes surrounding the central veins. Expressed in enterocytes of villi and crypts in small intestine. Expressed in brain, in some white matter regions like the corpus callosum and in the granular layer of the cerebellum. Expressed in Sertoli cells in testis. Expressed in colon. Expressed in tracheal and bronchial ciliated epithelium in the respiratory tract. Expressed in spleen, moderately in skin, and weakly in the gastrointestinal tract, lung, thymus, muscle, and prostate. As to expression, expressed in kidney cortex and medulla. Expressed in intestine, liver and colon.

The protein localises to the basolateral cell membrane. It localises to the apical cell membrane. The protein resides in the lateral cell membrane. It is found in the basal cell membrane. Its subcellular location is the cell membrane. The catalysed reaction is 1-methylnicotinamide(out) = 1-methylnicotinamide(in). It catalyses the reaction dopamine(out) = dopamine(in). It carries out the reaction serotonin(out) = serotonin(in). The enzyme catalyses (R)-adrenaline(out) = (R)-adrenaline(in). The catalysed reaction is (R)-noradrenaline(out) = (R)-noradrenaline(in). It catalyses the reaction histamine(out) = histamine(in). It carries out the reaction guanidine(out) = guanidine(in). The enzyme catalyses choline(out) = choline(in). The catalysed reaction is acetylcholine(in) = acetylcholine(out). It catalyses the reaction thiamine(in) = thiamine(out). It carries out the reaction agmatine(out) = agmatine(in). The enzyme catalyses putrescine(out) = putrescine(in). The catalysed reaction is spermidine(in) = spermidine(out). It catalyses the reaction (R)-carnitine(in) = (R)-carnitine(out). It carries out the reaction O-isobutanoyl-(R)-carnitine(in) = O-isobutanoyl-(R)-carnitine(out). The enzyme catalyses O-acetyl-(R)-carnitine(in) = O-acetyl-(R)-carnitine(out). The catalysed reaction is O-3-hydroxybutanoyl-(R)-carnitine(in) = O-3-hydroxybutanoyl-(R)-carnitine(out). It catalyses the reaction O-propanoyl-(R)-carnitine(in) = O-propanoyl-(R)-carnitine(out). It carries out the reaction O-butanoyl-(R)-carnitine(in) = O-butanoyl-(R)-carnitine(out). The enzyme catalyses O-2-methylbutanoyl-(R)-carnitine(in) = O-2-methylbutanoyl-(R)-carnitine(out). The catalysed reaction is O-3-methylbutanoyl-(R)-carnitine(in) = O-3-methylbutanoyl-(R)-carnitine(out). It catalyses the reaction O-hexanoyl-(R)-carnitine(in) = O-hexanoyl-(R)-carnitine(out). It carries out the reaction L-histidyl-L-proline diketopiperazine(in) = L-histidyl-L-proline diketopiperazine(out). The enzyme catalyses (R)-salsolinol(in) = (R)-salsolinol(out). The catalysed reaction is prostaglandin F2alpha(out) = prostaglandin F2alpha(in). It catalyses the reaction prostaglandin E2(out) = prostaglandin E2(in). Phosphorylation of the transporter leads to changes in its substrate affinity, resulting in a regulation of the transport activity. In contrast with human ortholog, ASP uptake is stimulated by protein kinase A (PKA) and C (PKC) and endogenous tyrosine kinase activation. ASP affinity is induced by PKC-dependent phosphorylation. Inhibited by cGMP, most likely through a cGMP-binding protein that interacts with OCT1. Functionally, electrogenic voltage-dependent transporter that mediates the transport of a variety of organic cations such as endogenous bioactive amines, cationic drugs and xenobiotics. Functions as a pH- and Na(+)-independent, bidirectional transporter. Cation cellular uptake or release is driven by the electrochemical potential (i.e. membrane potential and concentration gradient) and substrate selectivity. Hydrophobicity is a major requirement for recognition in polyvalent substrates and inhibitors. Primarily expressed in the basolateral membrane of hepatocytes and proximal tubules and involved in the uptake and disposition of cationic compounds from the blood by hepatic and renal clearance. Most likely functions as an uptake carrier in enterocytes contributing to the intestinal excretion and elimination of organic cations from the systemic circulation. Transports endogenous monoamines such as N-1-methylnicotinamide (NMN), guanidine, neurotransmitters dopamine, serotonin, noradrenaline, adrenaline and histamine, and quaternary ammonium compound such as choline. Also transports natural polyamines such as spermidine, agmatine and putrescine at low affinity, but relatively high turnover. Involved in the hepatic uptake of vitamin B1/thiamine, hence regulating hepatic lipid and energy metabolism. Contributes to the influx and efflux of fatty acid carriers carnitines and acylcarnitines across the basolateral membrane of hepatocytes, from the liver to the systemic circulation and inversely and may be involved in regulating the systemic availability of hepatic acylcarnitines. Mediates the bidirectional transport of acetylcholine (ACh) at the apical membrane of ciliated cell in airway epithelium, thereby playing a role in luminal release of ACh from bronchial epithelium. Transports dopaminergic neuromodulators cyclo(his-pro) and salsolinol with lower efficency. Also capable of transporting non-amine endogenous compounds such as prostaglandin E2 (PGE2) and prostaglandin F2-alpha (PGF2-alpha). May contribute to the transport of cationic compounds in testis across the blood-testis-barrier. Also mediates the uptake of xenobiotics tributylmethylammonium (TBuMA), quinidine, N-methyl-quinine (NMQ), N-methyl-quinidine (NMQD) N-(4,4-azo-n-pentyl)-quinuclidine (APQ), azidoprocainamide methoiodide (AMP), N-(4,4-azo-n-pentyl)-21-deoxyajmalinium (APDA) and 4-(4-(dimethylamino)styryl)-N-methylpyridinium (ASP). Its function is as follows. Functional isoform capable of transporting TEA. This is Solute carrier family 22 member 1 from Rattus norvegicus (Rat).